Reading from the N-terminus, the 80-residue chain is Acyl carrier protein (80 aa).

In terms of domain architecture, Carrier spans 1-79 (MSQEEILQKV…DAVKFIEAKK (79 aa)). Ser39 carries the post-translational modification O-(pantetheine 4'-phosphoryl)serine.

It belongs to the acyl carrier protein (ACP) family. In terms of processing, 4'-phosphopantetheine is transferred from CoA to a specific serine of apo-ACP by AcpS. This modification is essential for activity because fatty acids are bound in thioester linkage to the sulfhydryl of the prosthetic group.

It localises to the cytoplasm. The protein operates within lipid metabolism; fatty acid biosynthesis. Functionally, carrier of the growing fatty acid chain in fatty acid biosynthesis. In Prochlorococcus marinus (strain MIT 9515), this protein is Acyl carrier protein.